Here is a 398-residue protein sequence, read N- to C-terminus: Candidapepsin-3 (398 aa).

A signal peptide spans 1-18 (MFLKNIFIALAIALLADA). A propeptide spans 19–58 (TPTTSNNSPGFVALNFDVIKTHKNVTGPQGEINTNVNVKR) (activation peptide). N-linked (GlcNAc...) asparagine glycosylation is present at N42. The Peptidase A1 domain maps to 72-384 (YASDITVGSN…DLDDNEISLA (313 aa)). The active site involves D90. 90–92 (DTG) lines the pepstatin A pocket. Over residues 103-112 (VSCQAGQGQD) the composition is skewed to polar residues. Positions 103–139 (VSCQAGQGQDPNFCKNEGTYSPSSSSSSQNLNSPFSI) are disordered. C105 and C116 are joined by a disulfide. Residues 123–138 (SPSSSSSSQNLNSPFS) are compositionally biased toward low complexity. Pepstatin A contacts are provided by residues 140-143 (EYGD) and 274-278 (DSGTT). D274 is a catalytic residue. Cysteines 312 and 350 form a disulfide. N-linked (GlcNAc...) asparagine glycosylation is present at N313.

This sequence belongs to the peptidase A1 family. Post-translationally, O-glycosylated.

It localises to the secreted. It catalyses the reaction Preferential cleavage at the carboxyl of hydrophobic amino acids, but fails to cleave 15-Leu-|-Tyr-16, 16-Tyr-|-Leu-17 and 24-Phe-|-Phe-25 of insulin B chain. Activates trypsinogen, and degrades keratin.. This chain is Candidapepsin-3 (SAP3), found in Candida albicans (strain WO-1) (Yeast).